The sequence spans 176 residues: Ribosome maturation factor RimM (176 aa).

A PRC barrel domain is found at 93–170 (DGEYYHADLI…ELPTEIEGDT (78 aa)).

This sequence belongs to the RimM family. Binds ribosomal protein uS19.

It localises to the cytoplasm. Its function is as follows. An accessory protein needed during the final step in the assembly of 30S ribosomal subunit, possibly for assembly of the head region. Essential for efficient processing of 16S rRNA. May be needed both before and after RbfA during the maturation of 16S rRNA. It has affinity for free ribosomal 30S subunits but not for 70S ribosomes. The chain is Ribosome maturation factor RimM from Rhodopseudomonas palustris (strain BisB5).